The primary structure comprises 248 residues: Ubiquinone biosynthesis O-methyltransferase (248 aa).

The S-adenosyl-L-methionine site is built by Arg41, Gly72, Asp93, and Met136.

It belongs to the methyltransferase superfamily. UbiG/COQ3 family.

It carries out the reaction a 3-demethylubiquinol + S-adenosyl-L-methionine = a ubiquinol + S-adenosyl-L-homocysteine + H(+). The catalysed reaction is a 3-(all-trans-polyprenyl)benzene-1,2-diol + S-adenosyl-L-methionine = a 2-methoxy-6-(all-trans-polyprenyl)phenol + S-adenosyl-L-homocysteine + H(+). It participates in cofactor biosynthesis; ubiquinone biosynthesis. Functionally, O-methyltransferase that catalyzes the 2 O-methylation steps in the ubiquinone biosynthetic pathway. The sequence is that of Ubiquinone biosynthesis O-methyltransferase from Rhizobium etli (strain ATCC 51251 / DSM 11541 / JCM 21823 / NBRC 15573 / CFN 42).